We begin with the raw amino-acid sequence, 160 residues long: Protein max (160 aa).

Positions 1–13 (MSDNDDIEVESDE) are enriched in acidic residues. A disordered region spans residues 1 to 40 (MSDNDDIEVESDEEQPRFQSAADKRAHHNALERKRRDHIK). S2 bears the N-acetylserine mark. Residues S2 and S11 each carry the phosphoserine modification. One can recognise a bHLH domain in the interval 23 to 74 (DKRAHHNALERKRRDHIKDSFHSLRDSVPSLQGEKASRAQILDKATEYIQYM). Over residues 29–40 (NALERKRRDHIK) the composition is skewed to basic and acidic residues. Residue K66 is modified to N6-acetyllysine. Residues 81–102 (HQQDIDDLKRQNALLEQQVRAL) form a leucine-zipper region. Residues 103-160 (EKARSSAQLQTNYPSSDNSLYTNAKGSTISAFDGGSDSSSESEPEEPQSRKKLRMEAS) are disordered. S107 is subject to Phosphoserine. The segment covering 107 to 132 (SSAQLQTNYPSSDNSLYTNAKGSTIS) has biased composition (polar residues). Residues 152–156 (RKKLR) carry the Nuclear localization signal motif. N6-acetyllysine is present on residues K153 and K154.

Belongs to the MAX family. In terms of assembly, efficient DNA binding requires dimerization with another bHLH protein. Binds DNA as a heterodimer with MYC or MAD. Part of the E2F6.com-1 complex in G0 phase composed of E2F6, MGA, MAX, TFDP1, CBX3, BAT8, EUHMTASE1, RING1, RNF2, MBLR, L3MBTL2 and YAF2. Component of some MLL1/MLL complex, at least composed of the core components KMT2A/MLL1, ASH2L, HCFC1/HCF1, WDR5 and RBBP5, as well as the facultative components BACC1, CHD8, E2F6, HSP70, INO80C, KANSL1, LAS1L, MAX, MCRS1, MGA, MYST1/MOF, PELP1, PHF20, PRP31, RING2, RUVB1/TIP49A, RUVB2/TIP49B, SENP3, TAF1, TAF4, TAF6, TAF7, TAF9 and TEX10. Interacts with SPAG9. The heterodimer MYC:MAX interacts with ABI1; the interaction may enhance MYC:MAX transcriptional activity. In terms of processing, reversible lysine acetylation might regulate the nuclear-cytoplasmic shuttling of specific Max complexes. High levels found in the brain, heart and lung while lower levels are seen in the liver, kidney and skeletal muscle.

The protein resides in the nucleus. The protein localises to the cell projection. It localises to the dendrite. Transcription regulator. Forms a sequence-specific DNA-binding protein complex with MYC or MAD which recognizes the core sequence 5'-CAC[GA]TG-3'. The MYC:MAX complex is a transcriptional activator, whereas the MAD:MAX complex is a repressor. May repress transcription via the recruitment of a chromatin remodeling complex containing H3 'Lys-9' histone methyltransferase activity. Represses MYC transcriptional activity from E-box elements. The chain is Protein max from Homo sapiens (Human).